The primary structure comprises 123 residues: Ribosome-binding factor A (123 aa).

Belongs to the RbfA family. Monomer. Binds 30S ribosomal subunits, but not 50S ribosomal subunits or 70S ribosomes.

It is found in the cytoplasm. One of several proteins that assist in the late maturation steps of the functional core of the 30S ribosomal subunit. Associates with free 30S ribosomal subunits (but not with 30S subunits that are part of 70S ribosomes or polysomes). Required for efficient processing of 16S rRNA. May interact with the 5'-terminal helix region of 16S rRNA. This Legionella pneumophila (strain Paris) protein is Ribosome-binding factor A.